A 195-amino-acid polypeptide reads, in one-letter code: Probable GTP-binding protein EngB (195 aa).

Residues 24–195 form the EngB-type G domain; it reads ELPEIALAGR…EAWDAILEKL (172 aa). Residues 32 to 39, 59 to 63, 77 to 80, 144 to 147, and 176 to 178 each bind GTP; these read GRSNVGKS, GKTQL, DVPG, TKAD, and FSS. Mg(2+) is bound by residues serine 39 and threonine 61.

The protein belongs to the TRAFAC class TrmE-Era-EngA-EngB-Septin-like GTPase superfamily. EngB GTPase family. Requires Mg(2+) as cofactor.

In terms of biological role, necessary for normal cell division and for the maintenance of normal septation. The polypeptide is Probable GTP-binding protein EngB (Streptococcus pneumoniae (strain JJA)).